Reading from the N-terminus, the 345-residue chain is Protein RecA (345 aa).

65–72 (GPESSGKT) serves as a coordination point for ATP.

Belongs to the RecA family.

The protein localises to the cytoplasm. Can catalyze the hydrolysis of ATP in the presence of single-stranded DNA, the ATP-dependent uptake of single-stranded DNA by duplex DNA, and the ATP-dependent hybridization of homologous single-stranded DNAs. It interacts with LexA causing its activation and leading to its autocatalytic cleavage. The polypeptide is Protein RecA (Stenotrophomonas maltophilia (strain R551-3)).